Consider the following 410-residue polypeptide: Peptidase T (410 aa).

A Zn(2+)-binding site is contributed by H79. D81 is an active-site residue. D142 is a binding site for Zn(2+). The Proton acceptor role is filled by E176. Residues E177, D199, and H381 each contribute to the Zn(2+) site.

It belongs to the peptidase M20B family. It depends on Zn(2+) as a cofactor.

It localises to the cytoplasm. It carries out the reaction Release of the N-terminal residue from a tripeptide.. Functionally, cleaves the N-terminal amino acid of tripeptides. The protein is Peptidase T of Listeria welshimeri serovar 6b (strain ATCC 35897 / DSM 20650 / CCUG 15529 / CIP 8149 / NCTC 11857 / SLCC 5334 / V8).